A 793-amino-acid chain; its full sequence is Lon protease 1 (793 aa).

One can recognise a Lon N-terminal domain in the interval 8-202 (VPVIPLKNSV…KLLDRLQELK (195 aa)). Residue 354 to 361 (GPPGVGKT) coordinates ATP. The 181-residue stretch at 590–770 (LLPPGVVTGL…NEVLKITLGV (181 aa)) folds into the Lon proteolytic domain. Residues S676 and K719 contribute to the active site.

This sequence belongs to the peptidase S16 family. In terms of assembly, homohexamer. Organized in a ring with a central cavity.

It is found in the cytoplasm. The catalysed reaction is Hydrolysis of proteins in presence of ATP.. Its function is as follows. ATP-dependent serine protease that mediates the selective degradation of mutant and abnormal proteins as well as certain short-lived regulatory proteins. Required for cellular homeostasis and for survival from DNA damage and developmental changes induced by stress. Degrades polypeptides processively to yield small peptide fragments that are 5 to 10 amino acids long. Binds to DNA in a double-stranded, site-specific manner. This is Lon protease 1 from Bdellovibrio bacteriovorus (strain ATCC 15356 / DSM 50701 / NCIMB 9529 / HD100).